Here is a 123-residue protein sequence, read N- to C-terminus: uncharacterized protein (123 aa).

The chain crosses the membrane as a helical span at residues 5 to 25 (GTLVILFAIILILCIMLLFYY).

It belongs to the asfivirus CP123L family.

It localises to the host membrane. It is found in the virion. This is an uncharacterized protein from Ornithodoros (relapsing fever ticks).